The sequence spans 197 residues: Imidazoleglycerol-phosphate dehydratase (197 aa).

Belongs to the imidazoleglycerol-phosphate dehydratase family.

It localises to the cytoplasm. The catalysed reaction is D-erythro-1-(imidazol-4-yl)glycerol 3-phosphate = 3-(imidazol-4-yl)-2-oxopropyl phosphate + H2O. The protein operates within amino-acid biosynthesis; L-histidine biosynthesis; L-histidine from 5-phospho-alpha-D-ribose 1-diphosphate: step 6/9. This chain is Imidazoleglycerol-phosphate dehydratase, found in Pseudomonas putida (strain W619).